A 236-amino-acid polypeptide reads, in one-letter code: Uridylate kinase (236 aa).

10–13 (KLSG) contacts ATP. Position 52 (Gly-52) interacts with UMP. Residues Gly-53 and Arg-57 each contribute to the ATP site. UMP is bound by residues Asp-72 and 133–140 (TGNPFFTT). ATP contacts are provided by Thr-160, Tyr-166, and Asp-169.

The protein belongs to the UMP kinase family. In terms of assembly, homohexamer.

Its subcellular location is the cytoplasm. The enzyme catalyses UMP + ATP = UDP + ADP. It functions in the pathway pyrimidine metabolism; CTP biosynthesis via de novo pathway; UDP from UMP (UMPK route): step 1/1. Its activity is regulated as follows. Inhibited by UTP. In terms of biological role, catalyzes the reversible phosphorylation of UMP to UDP. In Polaromonas sp. (strain JS666 / ATCC BAA-500), this protein is Uridylate kinase.